The following is a 462-amino-acid chain: NADH-quinone oxidoreductase subunit N (462 aa).

The next 13 helical transmembrane spans lie at 15–35 (LSYP…CSGF), 42–62 (FYIG…LNNA), 80–100 (IVSF…LLMQ), 113–133 (LFMI…LIFI), 161–181 (YFSI…FIYL), 204–224 (LLGA…LAPF), 239–259 (LVAF…IRLF), 267–287 (FEYI…FAAL), 295–315 (MFAY…IPLL), 323–343 (ILLA…AVFM), 366–386 (IAFC…FGVF), 396–416 (VILN…VIML), and 441–461 (FIQN…ILLM).

It belongs to the complex I subunit 2 family. NDH-1 is composed of 14 different subunits. Subunits NuoA, H, J, K, L, M, N constitute the membrane sector of the complex.

It is found in the cell inner membrane. The enzyme catalyses a quinone + NADH + 5 H(+)(in) = a quinol + NAD(+) + 4 H(+)(out). NDH-1 shuttles electrons from NADH, via FMN and iron-sulfur (Fe-S) centers, to quinones in the respiratory chain. The immediate electron acceptor for the enzyme in this species is believed to be ubiquinone. Couples the redox reaction to proton translocation (for every two electrons transferred, four hydrogen ions are translocated across the cytoplasmic membrane), and thus conserves the redox energy in a proton gradient. The chain is NADH-quinone oxidoreductase subunit N from Campylobacter jejuni (strain RM1221).